A 280-amino-acid chain; its full sequence is 4-diphosphocytidyl-2-C-methyl-D-erythritol kinase (280 aa).

Residue Lys8 is part of the active site. An ATP-binding site is contributed by 91–101; that stretch reads PVAAGLAGGSA. The active site involves Asp133.

Belongs to the GHMP kinase family. IspE subfamily.

The enzyme catalyses 4-CDP-2-C-methyl-D-erythritol + ATP = 4-CDP-2-C-methyl-D-erythritol 2-phosphate + ADP + H(+). The protein operates within isoprenoid biosynthesis; isopentenyl diphosphate biosynthesis via DXP pathway; isopentenyl diphosphate from 1-deoxy-D-xylulose 5-phosphate: step 3/6. In terms of biological role, catalyzes the phosphorylation of the position 2 hydroxy group of 4-diphosphocytidyl-2C-methyl-D-erythritol. In Clostridium acetobutylicum (strain ATCC 824 / DSM 792 / JCM 1419 / IAM 19013 / LMG 5710 / NBRC 13948 / NRRL B-527 / VKM B-1787 / 2291 / W), this protein is 4-diphosphocytidyl-2-C-methyl-D-erythritol kinase.